The chain runs to 555 residues: Dihydroxy-acid dehydratase (555 aa).

Position 78 (D78) interacts with Mg(2+). C119 provides a ligand contact to [2Fe-2S] cluster. D120 and K121 together coordinate Mg(2+). At K121 the chain carries N6-carboxylysine. [2Fe-2S] cluster is bound at residue C195. Residue E444 coordinates Mg(2+). S470 acts as the Proton acceptor in catalysis.

The protein belongs to the IlvD/Edd family. As to quaternary structure, homodimer. [2Fe-2S] cluster serves as cofactor. It depends on Mg(2+) as a cofactor.

It catalyses the reaction (2R)-2,3-dihydroxy-3-methylbutanoate = 3-methyl-2-oxobutanoate + H2O. The catalysed reaction is (2R,3R)-2,3-dihydroxy-3-methylpentanoate = (S)-3-methyl-2-oxopentanoate + H2O. Its pathway is amino-acid biosynthesis; L-isoleucine biosynthesis; L-isoleucine from 2-oxobutanoate: step 3/4. The protein operates within amino-acid biosynthesis; L-valine biosynthesis; L-valine from pyruvate: step 3/4. Its function is as follows. Functions in the biosynthesis of branched-chain amino acids. Catalyzes the dehydration of (2R,3R)-2,3-dihydroxy-3-methylpentanoate (2,3-dihydroxy-3-methylvalerate) into 2-oxo-3-methylpentanoate (2-oxo-3-methylvalerate) and of (2R)-2,3-dihydroxy-3-methylbutanoate (2,3-dihydroxyisovalerate) into 2-oxo-3-methylbutanoate (2-oxoisovalerate), the penultimate precursor to L-isoleucine and L-valine, respectively. This is Dihydroxy-acid dehydratase from Dehalococcoides mccartyi (strain CBDB1).